We begin with the raw amino-acid sequence, 124 residues long: Probable cytochrome b5 1 (124 aa).

One can recognise a Cytochrome b5 heme-binding domain in the interval 3-79; that stretch reads VKYFEPEEIV…LEEMYIGDLK (77 aa). The heme site is built by H38 and H62. A helical transmembrane segment spans residues 100-120; that stretch reads PPLPLLIALIVLPAIAVIVFV.

The protein belongs to the cytochrome b5 family.

It is found in the endoplasmic reticulum membrane. It localises to the microsome membrane. Its function is as follows. Membrane bound hemoprotein which function as an electron carrier for several membrane bound oxygenases. The chain is Probable cytochrome b5 1 from Schizosaccharomyces pombe (strain 972 / ATCC 24843) (Fission yeast).